We begin with the raw amino-acid sequence, 488 residues long: Stromelysin-3 (488 aa).

The N-terminal stretch at 1 to 31 (MAPAAWLRSAAARALLPPMLLLLLQPPPLLA) is a signal peptide. Positions 32–97 (RALPPDAHHL…GLSARNRQKR (66 aa)) are cleaved as a propeptide — activation peptide. A disordered region spans residues 41–93 (LHAERRGPQPWHAALPSSPAPAPATQEAPRPASSLRPPRCGVPDPSDGLSARN). The segment covering 50–79 (PWHAALPSSPAPAPATQEAPRPASSLRPPR) has biased composition (low complexity). Positions 78–85 (PRCGVPDP) match the Cysteine switch motif. Residues Cys-80 and Asp-166 each coordinate Zn(2+). Positions 171, 172, 174, and 176 each coordinate Ca(2+). 3 residues coordinate Zn(2+): His-179, His-192, and His-215. The active site involves Glu-216. Residues His-219 and His-225 each coordinate Zn(2+). Hemopexin repeat units follow at residues 291-339 (PDAC…WQGL), 340-382 (PSPV…ELGL), 384-432 (RFPV…WRGV), and 433-480 (PSEI…FFGC). A disulfide bridge links Cys-294 with Cys-480.

It belongs to the peptidase M10A family. It depends on Ca(2+) as a cofactor. Zn(2+) serves as cofactor. Post-translationally, the precursor is cleaved by a furin endopeptidase. As to expression, specifically expressed in stromal cells of breast carcinomas.

Its subcellular location is the secreted. The protein resides in the extracellular space. It localises to the extracellular matrix. In terms of biological role, may play an important role in the progression of epithelial malignancies. The chain is Stromelysin-3 (MMP11) from Homo sapiens (Human).